The sequence spans 621 residues: Membrane protein insertase YidC (621 aa).

6 helical membrane passes run 1-21 (MDKN…GFSI), 363-383 (GWGL…KVLV), 436-456 (MGGC…FFFV), 486-506 (IPLL…TNIL), 527-547 (LMMY…SSGL), and 549-569 (YYYF…RKTT).

It belongs to the OXA1/ALB3/YidC family. Type 1 subfamily. Interacts with the Sec translocase complex via SecD. Specifically interacts with transmembrane segments of nascent integral membrane proteins during membrane integration.

The protein localises to the cell inner membrane. Its function is as follows. Required for the insertion and/or proper folding and/or complex formation of integral membrane proteins into the membrane. Involved in integration of membrane proteins that insert both dependently and independently of the Sec translocase complex, as well as at least some lipoproteins. Aids folding of multispanning membrane proteins. The protein is Membrane protein insertase YidC of Phocaeicola vulgatus (strain ATCC 8482 / DSM 1447 / JCM 5826 / CCUG 4940 / NBRC 14291 / NCTC 11154) (Bacteroides vulgatus).